Consider the following 418-residue polypeptide: D-amino acid dehydrogenase (418 aa).

3–17 (VLVLGAGVAGVSSAW) lines the FAD pocket.

It belongs to the DadA oxidoreductase family. FAD is required as a cofactor.

The catalysed reaction is a D-alpha-amino acid + A + H2O = a 2-oxocarboxylate + AH2 + NH4(+). It participates in amino-acid degradation; D-alanine degradation; NH(3) and pyruvate from D-alanine: step 1/1. In terms of biological role, oxidative deamination of D-amino acids. The protein is D-amino acid dehydrogenase of Neisseria meningitidis serogroup C (strain 053442).